The following is a 268-amino-acid chain: Thiazole synthase (268 aa).

Lysine 100 (schiff-base intermediate with DXP) is an active-site residue. Residues glycine 161, 187-188, and 209-210 each bind 1-deoxy-D-xylulose 5-phosphate; these read AG and NT. The segment at 248-268 is disordered; it reads ATPSSPSEGMITGSPHSAANN.

Belongs to the ThiG family. As to quaternary structure, homotetramer. Forms heterodimers with either ThiH or ThiS.

It is found in the cytoplasm. It carries out the reaction [ThiS sulfur-carrier protein]-C-terminal-Gly-aminoethanethioate + 2-iminoacetate + 1-deoxy-D-xylulose 5-phosphate = [ThiS sulfur-carrier protein]-C-terminal Gly-Gly + 2-[(2R,5Z)-2-carboxy-4-methylthiazol-5(2H)-ylidene]ethyl phosphate + 2 H2O + H(+). It participates in cofactor biosynthesis; thiamine diphosphate biosynthesis. In terms of biological role, catalyzes the rearrangement of 1-deoxy-D-xylulose 5-phosphate (DXP) to produce the thiazole phosphate moiety of thiamine. Sulfur is provided by the thiocarboxylate moiety of the carrier protein ThiS. In vitro, sulfur can be provided by H(2)S. The polypeptide is Thiazole synthase (Nitrosomonas eutropha (strain DSM 101675 / C91 / Nm57)).